Reading from the N-terminus, the 717-residue chain is Polyribonucleotide nucleotidyltransferase (717 aa).

The Mg(2+) site is built by D486 and D492. In terms of domain architecture, KH spans P553–I612. The S1 motif domain occupies G622–V715. The tract at residues R659–P689 is disordered. Over residues S666–R675 the composition is skewed to basic residues.

This sequence belongs to the polyribonucleotide nucleotidyltransferase family. It depends on Mg(2+) as a cofactor.

Its subcellular location is the cytoplasm. The catalysed reaction is RNA(n+1) + phosphate = RNA(n) + a ribonucleoside 5'-diphosphate. In terms of biological role, involved in mRNA degradation. Catalyzes the phosphorolysis of single-stranded polyribonucleotides processively in the 3'- to 5'-direction. The sequence is that of Polyribonucleotide nucleotidyltransferase from Borrelia hermsii (strain HS1 / DAH).